Here is a 64-residue protein sequence, read N- to C-terminus: Large ribosomal subunit protein uL29 (64 aa).

The protein belongs to the universal ribosomal protein uL29 family.

The polypeptide is Large ribosomal subunit protein uL29 (Coprothermobacter proteolyticus (strain ATCC 35245 / DSM 5265 / OCM 4 / BT)).